The sequence spans 97 residues: MDWLREAADGSLVLSLHVQPGAKKTEFVGPHGEAMKLRLAAPPVDGKANAALTVFLAAFCGVGRSAVSLLSGETSRAKRVRIEGAGSEALARLRALG.

This sequence belongs to the UPF0235 family.

This Aromatoleum aromaticum (strain DSM 19018 / LMG 30748 / EbN1) (Azoarcus sp. (strain EbN1)) protein is UPF0235 protein AZOSEA09540.